The following is a 258-amino-acid chain: Microtubule-associated protein RP/EB family member 1 (258 aa).

In terms of domain architecture, Calponin-homology (CH) spans 14–116 (NLSRHDMLAW…FVQWFKKFFD (103 aa)). In terms of domain architecture, EB1 C-terminal spans 175–245 (KKAAGDDESA…LYATDEGFVI (71 aa)).

This sequence belongs to the MAPRE family.

It is found in the cytoplasm. The protein resides in the cytoskeleton. It localises to the microtubule organizing center. The protein localises to the centrosome. Its subcellular location is the golgi apparatus. It is found in the spindle. The protein resides in the spindle pole. Plus-end tracking protein (+TIP) that binds to the plus-end of microtubules and regulates the dynamics of the microtubule cytoskeleton. Promotes cytoplasmic microtubule nucleation and elongation. Involved in mitotic spindle positioning by stabilizing microtubules and promoting dynamic connection between astral microtubules and the cortex during mitotic chromosome segregation. The sequence is that of Microtubule-associated protein RP/EB family member 1 (MAPRE1) from Gallus gallus (Chicken).